We begin with the raw amino-acid sequence, 976 residues long: Metabotropic glutamate receptor (976 aa).

The signal sequence occupies residues 1 to 25 (MKQKNNNGTILVVVMVLSWSRVVDL). Over 26 to 626 (KSPSNTHTQD…IQYMKWNSLF (601 aa)) the chain is Extracellular. N-linked (GlcNAc...) asparagine glycosylation is found at Asn112 and Asn143. L-glutamate contacts are provided by residues Ser158 and 179 to 181 (AST). N-linked (GlcNAc...) asparagine glycosylation occurs at Asn216. Residue Tyr229 coordinates L-glutamate. The N-linked (GlcNAc...) asparagine glycan is linked to Asn299. Asp310 contacts L-glutamate. Asn386 is a glycosylation site (N-linked (GlcNAc...) asparagine). L-glutamate is bound at residue Lys417. N-linked (GlcNAc...) asparagine glycosylation is found at Asn491 and Asn524. Residues 627-649 (ALIPMAIAIFGIALTSIVIVLFA) form a helical membrane-spanning segment. At 650–663 (KNHDTPLVRASGRE) the chain is on the cytoplasmic side. A helical transmembrane segment spans residues 664–684 (LSYTLLFGILVCYCNTFALIA). The Extracellular portion of the chain corresponds to 685-695 (KPTIGSCVLQR). The chain crosses the membrane as a helical span at residues 696–714 (FGIGVGFSIIYSALLTKTN). Residues 715 to 738 (RISRIFHSASKSAQRLKYISPQSQ) lie on the Cytoplasmic side of the membrane. Residues 739–759 (VVITTSLIAIQVLITMIWMVV) form a helical membrane-spanning segment. Residues 760–782 (EPPGTRFYYPDRREVILKCKIQD) are Extracellular-facing. A helical transmembrane segment spans residues 783–804 (MSFLFSQLYNMILITICTIYAI). The Cytoplasmic portion of the chain corresponds to 805–817 (KTRKIPENFNESK). Residues 818-840 (FIGFTMYTTCIIWLAFVPIYFGT) form a helical membrane-spanning segment. Over 841 to 850 (GNSYEVQTTT) the chain is Extracellular. A helical transmembrane segment spans residues 851-876 (LCISISLSASVALVCLYSPKVYILVF). Over 877–976 (HPDKNVRKLT…VEPICHIVNK (100 aa)) the chain is Cytoplasmic. The disordered stretch occupies residues 920–946 (LTGGAVGTNASSSTLPTQNSPHLDEAS). Polar residues predominate over residues 927 to 946 (TNASSSTLPTQNSPHLDEAS).

This sequence belongs to the G-protein coupled receptor 3 family. As to expression, expressed in the neurons of the larval CNS from the beginning of the first until the third instar. Expression in the third-instar larval CNS is restricted to a discrete number of somas and projections in the brain lobes and in the ventral ganglion. In the ventral nerve cord, expression is detected both in somas and projections. Expressed in the antennal lobes, the optic lobes, the central complex and the median bundle in the adult CNS.

It is found in the cell membrane. In terms of biological role, G-protein coupled receptor for glutamate. Ligand binding causes a conformation change that triggers signaling via guanine nucleotide-binding proteins (G proteins) and modulates the activity of down-stream effectors. This is Metabotropic glutamate receptor (mGluR) from Drosophila melanogaster (Fruit fly).